The sequence spans 247 residues: MTAIDLNADLGEGCDNDEALLALVSSANIACGWHAGDVNTMRQTTAWALRQGVSIGAHPSFPDRENFGRTEMHLPPDEVYAGVLFQIGGLSAIVRAQGGRLAHVKPHGALYNQAARDRPLAMAIARAVRDFDASLAVFGLAGGELVLAARELGLAAKEEVFADRGYNADGTLVKRGTPGALLENEEAALSQTLAMVREQRVQSVDGVWVPIRAQTVCLHGDGAHALAFARRIRDRLGSEGIAVRAGA.

This sequence belongs to the LamB/PxpA family. Forms a complex composed of PxpA, PxpB and PxpC.

It carries out the reaction 5-oxo-L-proline + ATP + 2 H2O = L-glutamate + ADP + phosphate + H(+). Catalyzes the cleavage of 5-oxoproline to form L-glutamate coupled to the hydrolysis of ATP to ADP and inorganic phosphate. This Ralstonia nicotianae (strain ATCC BAA-1114 / GMI1000) (Ralstonia solanacearum) protein is 5-oxoprolinase subunit A 1.